The sequence spans 1242 residues: ATP-dependent RNA helicase DHX8 (1242 aa).

2 disordered regions span residues 75-283 and 354-449; these read RPSR…DDPE and SMKE…GLLP. Composition is skewed to basic and acidic residues over residues 87-97, 113-141, and 180-196; these read TVGDKKEDKKS, YSKK…KTDM, and RDRD…DRHS. Basic residues-rich tracts occupy residues 197-222 and 232-252; these read DRRR…RRSR and DRRH…RSRS. Residues 253–269 are compositionally biased toward basic and acidic residues; that stretch reads RSTERRDRRDRSRDCSE. Positions 285–356 constitute an S1 motif domain; sequence GKIYSGKIAN…TGQKVSLSMK (72 aa). The segment covering 388–399 has biased composition (polar residues); sequence FSSSTSMLNLQG. Residues 439–449 are compositionally biased toward acidic residues; that stretch reads PDFDEETGLLP. One can recognise a Helicase ATP-binding domain in the interval 596–759; sequence IKAVTDNQIL…FFKAPIFTIP (164 aa). 609-616 serves as a coordination point for ATP; that stretch reads GETGSGKT. The short motif at 706–709 is the DEAH box element; sequence DEAH. Positions 777–957 constitute a Helicase C-terminal domain; the sequence is YLDASLITVM…TTVLQLKTMG (181 aa).

The protein belongs to the DEAD box helicase family. DEAH subfamily. DDX8/PRP22 sub-subfamily. As to quaternary structure, identified in the spliceosome C complex.

It localises to the nucleus. It carries out the reaction ATP + H2O = ADP + phosphate + H(+). Functionally, involved in pre-mRNA splicing as component of the spliceosome. Facilitates nuclear export of spliced mRNA by releasing the RNA from the spliceosome. Before and after egg-chamber formation, required for nurse-cell chromatin dispersal (NCCD) probably by playing a role in spliceosome localization to chromatin/interchromatin spaces. The polypeptide is ATP-dependent RNA helicase DHX8 (Drosophila melanogaster (Fruit fly)).